An 87-amino-acid chain; its full sequence is SGAAAAQTAAASSLHQASNHTFYPWMAIAGESTADPSKSKIRSDLTQYGGISTDMGKRYSESLAGSLLPDWLGTNGLRRRGRQTYTR.

An Antp-type hexapeptide motif is present at residues 22–27; the sequence is FYPWMA.

Belongs to the Antp homeobox family. In the embryo, expression is seen in the epidermis, somatic and visceral mesoderm, and the peripheral and central nervous system.

The protein localises to the nucleus. Sequence-specific transcription factor which is part of a developmental regulatory system that provides cells with specific positional identities on the anterior-posterior axis. Binds the consensus region 5'-TTAAT[GT][GA]-3'. This homeotic protein controls development of the cells in the posterior thoracic and first abdominal segments. It activates the synthesis of the decapentaplegic (DPP) growth factor. This Drosophila virilis (Fruit fly) protein is Homeotic protein ultrabithorax (Ubx).